Reading from the N-terminus, the 225-residue chain is Shikimate kinase (225 aa).

Position 27-32 (27-32 (GAGKTT)) interacts with ATP. Position 31 (T31) interacts with Mg(2+). Substrate is bound by residues D49, R73, and G95. An ATP-binding site is contributed by R132. Residue R150 coordinates substrate. Residues 186–225 (GGSEPDEAADAAGGSEPDEAADAAGGSEPDEAADAAGGKR) form a disordered region.

Belongs to the shikimate kinase family. In terms of assembly, monomer. Mg(2+) serves as cofactor.

Its subcellular location is the cytoplasm. The catalysed reaction is shikimate + ATP = 3-phosphoshikimate + ADP + H(+). Its pathway is metabolic intermediate biosynthesis; chorismate biosynthesis; chorismate from D-erythrose 4-phosphate and phosphoenolpyruvate: step 5/7. Its function is as follows. Catalyzes the specific phosphorylation of the 3-hydroxyl group of shikimic acid using ATP as a cosubstrate. The protein is Shikimate kinase of Frankia casuarinae (strain DSM 45818 / CECT 9043 / HFP020203 / CcI3).